The primary structure comprises 431 residues: Isochorismate synthase MenF (431 aa).

Residue lysine 190 is the Proton acceptor of the active site. Glutamate 240 functions as the Proton donor in the catalytic mechanism. 2 residues coordinate Mg(2+): glutamate 284 and glutamate 416.

Belongs to the isochorismate synthase family. In terms of assembly, homodimer. Mg(2+) serves as cofactor.

It catalyses the reaction chorismate = isochorismate. Its pathway is quinol/quinone metabolism; 1,4-dihydroxy-2-naphthoate biosynthesis; 1,4-dihydroxy-2-naphthoate from chorismate: step 1/7. The protein operates within quinol/quinone metabolism; menaquinone biosynthesis. Its function is as follows. Catalyzes the conversion of chorismate to isochorismate. Can also catalyze the reverse reaction, but with a lower efficiency. This is Isochorismate synthase MenF from Escherichia coli (strain K12).